The sequence spans 460 residues: Elongation factor 1-alpha-B (460 aa).

G2 bears the N,N,N-trimethylglycine mark. The residue at position 3 (K3) is an N6,N6-dimethyllysine; alternate. K3 is subject to N6-methyllysine; alternate. Residues 5 to 240 (KGHINVVVIG…DSIEPPARPT (236 aa)) enclose the tr-type G domain. Positions 14–21 (GHVDSGKS) are G1. 14-21 (GHVDSGKS) is a GTP binding site. At K30 the chain carries N6-methyllysine. The tract at residues 70 to 74 (GITID) is G2. Position 79 is an N6,N6,N6-trimethyllysine (K79). A G3 region spans residues 91-94 (DAPG). Residues 91-95 (DAPGH) and 153-156 (NKMD) contribute to the GTP site. The segment at 153 to 156 (NKMD) is G4. Positions 192–194 (SGF) are G5. K316 is modified (N6,N6-dimethyllysine; alternate). N6-methyllysine; alternate is present on K316. K390 carries the post-translational modification N6-methyllysine.

The protein belongs to the TRAFAC class translation factor GTPase superfamily. Classic translation factor GTPase family. EF-Tu/EF-1A subfamily.

It is found in the cytoplasm. Functionally, this protein promotes the GTP-dependent binding of aminoacyl-tRNA to the A-site of ribosomes during protein biosynthesis. The protein is Elongation factor 1-alpha-B (tef102) of Schizosaccharomyces pombe (strain 972 / ATCC 24843) (Fission yeast).